Here is a 270-residue protein sequence, read N- to C-terminus: Tetraspanin-17 (270 aa).

Residues M1–Y19 lie on the Cytoplasmic side of the membrane. A helical transmembrane segment spans residues F20 to L40. Residues W41 to P63 lie on the Extracellular side of the membrane. A glycan (N-linked (GlcNAc...) asparagine) is linked at N51. The chain crosses the membrane as a helical span at residues V64–G84. The Cytoplasmic segment spans residues A85–K94. The chain crosses the membrane as a helical span at residues F95–F115. Over V116–N234 the chain is Extracellular. Disulfide bonds link C155–C223, C156–C188, C172–C182, and C189–C202. N-linked (GlcNAc...) asparagine glycosylation is present at N171. Residues L235–L255 traverse the membrane as a helical segment. Residues A256–W270 lie on the Cytoplasmic side of the membrane.

It belongs to the tetraspanin (TM4SF) family. Interacts with ADAM10; the interaction influences ADAM10 substrate specificity, endocytosis and turnover.

Its subcellular location is the cell membrane. In terms of biological role, part of TspanC8 subgroup, composed of 6 members that interact with the transmembrane metalloprotease ADAM10. This interaction is required for ADAM10 exit from the endoplasmic reticulum and for enzymatic maturation and trafficking to the cell surface as well as substrate specificity. Different TspanC8/ADAM10 complexes have distinct substrates. Seems to regulate VE-cadherin expression in endothelial cells probably through interaction with ADAM10, promoting leukocyte transmigration. The sequence is that of Tetraspanin-17 (TSPAN17) from Bos taurus (Bovine).